The sequence spans 124 residues: U-scoloptoxin-Er5d (124 aa).

Positions 1-22 (MKTNCEFPLLCLLIVLVANVEG) are cleaved as a signal peptide. Residues 23-94 (EVEDNELKMV…KRLWRNWERR (72 aa)) constitute a propeptide that is removed on maturation. RLWRNWE repeat units follow at residues 34–40 (RLWRNWE), 61–67 (RLWRNWE), and 86–92 (RLWRNWE). Glutamine 95 carries the post-translational modification Pyrrolidone carboxylic acid. The stretch at 107-113 (ELWRNWE) is one RLWRNWE 4; approximate repeat. A propeptide spanning residues 112–124 (WEDLKRRQVGRFE) is cleaved from the precursor.

It belongs to the scoloptoxin-08 family. Expressed by the venom gland.

The protein localises to the secreted. The protein is U-scoloptoxin-Er5d of Ethmostigmus rubripes (Giant centipede).